Reading from the N-terminus, the 474-residue chain is MTQKLHIKTWGCQMNEYDSSKMADLLLSTHGLELTEAPEEADVLLLNTCSIREKAQEKVFHQLGRWKELKKNNPNLVIGVGGCVASQEGEHIRHRAPYVDIIFGPQTLHRLPEMINQIRGGKSSVVDVSFPEIEKFDRLPEPRAEGPTAFVSIMEGCNKYCTFCVVPYTRGEEVSRPVDDVLFEIAQLAEQGVREVNLLGQNVNAYRGPTHDGQICSFAELLRLVASIDGIDRLRFTTSHPIEFTDDIIDVYRDTPELVSFLHLPVQAGSDRVLTMMKRAHTALEYKSIIRKLRAVRPDIQISSDFIVGFPGETAEDFEQTMNLIAQVNFDMSFSFVYSARPGTPAADMPDDVTEDEKKQRLYVLQERINQQAAQFSRRMLGTEQRVLVEGPSKKDIMELTGRTETNRIVNFQGSPEMIGKFVDVKITDVYTNSLRGEVVRTEDEMGLRIAQSPQEVMNRTRKEDELGVGRYHG.

The MTTase N-terminal domain occupies 3–120 (QKLHIKTWGC…LPEMINQIRG (118 aa)). Residues C12, C49, C83, C157, C161, and C164 each contribute to the [4Fe-4S] cluster site. Residues 143–375 (RAEGPTAFVS…QERINQQAAQ (233 aa)) enclose the Radical SAM core domain. Residues 378 to 441 (RRMLGTEQRV…TNSLRGEVVR (64 aa)) form the TRAM domain.

The protein belongs to the methylthiotransferase family. MiaB subfamily. In terms of assembly, monomer. The cofactor is [4Fe-4S] cluster.

The protein localises to the cytoplasm. It catalyses the reaction N(6)-dimethylallyladenosine(37) in tRNA + (sulfur carrier)-SH + AH2 + 2 S-adenosyl-L-methionine = 2-methylsulfanyl-N(6)-dimethylallyladenosine(37) in tRNA + (sulfur carrier)-H + 5'-deoxyadenosine + L-methionine + A + S-adenosyl-L-homocysteine + 2 H(+). Catalyzes the methylthiolation of N6-(dimethylallyl)adenosine (i(6)A), leading to the formation of 2-methylthio-N6-(dimethylallyl)adenosine (ms(2)i(6)A) at position 37 in tRNAs that read codons beginning with uridine. The sequence is that of tRNA-2-methylthio-N(6)-dimethylallyladenosine synthase from Haemophilus influenzae (strain PittGG).